Here is a 141-residue protein sequence, read N- to C-terminus: Succinate dehydrogenase assembly factor 2, mitochondrial (141 aa).

The protein belongs to the SDHAF2 family. Interacts with the flavoprotein subunit within the SDH catalytic dimer.

It localises to the mitochondrion matrix. Its function is as follows. Plays an essential role in the assembly of succinate dehydrogenase (SDH), an enzyme complex (also referred to as respiratory complex II) that is a component of both the tricarboxylic acid (TCA) cycle and the mitochondrial electron transport chain, and which couples the oxidation of succinate to fumarate with the reduction of ubiquinone (coenzyme Q) to ubiquinol. Required for flavinylation (covalent attachment of FAD) of the flavoprotein subunit of the SDH catalytic dimer. This is Succinate dehydrogenase assembly factor 2, mitochondrial from Dictyostelium discoideum (Social amoeba).